Reading from the N-terminus, the 213-residue chain is N-(5'-phosphoribosyl)anthranilate isomerase (213 aa).

This sequence belongs to the TrpF family.

The enzyme catalyses N-(5-phospho-beta-D-ribosyl)anthranilate = 1-(2-carboxyphenylamino)-1-deoxy-D-ribulose 5-phosphate. Its pathway is amino-acid biosynthesis; L-tryptophan biosynthesis; L-tryptophan from chorismate: step 3/5. This Methanocella arvoryzae (strain DSM 22066 / NBRC 105507 / MRE50) protein is N-(5'-phosphoribosyl)anthranilate isomerase.